The following is a 166-amino-acid chain: MYIDTAELCDIYLDQIDVVEPIFSSFGGKSTFFGKITTIKCFENNGLISEILEENGEGRVLLIDGGGAVRRALIDANLAQLAADNGWEGIIVYGAIRQLQQLENINIGIQALAPIPVGSDEQSIGETDVPVNFGGVTFFPDDYIYADLTGIILSQEPLDLEEFDSL.

It belongs to the RraA family. As to quaternary structure, homotrimer. Binds to both RNA-binding sites in the C-terminal region of Rne and to RhlB.

Its subcellular location is the cytoplasm. Its function is as follows. Globally modulates RNA abundance by binding to RNase E (Rne) and regulating its endonucleolytic activity. Can modulate Rne action in a substrate-dependent manner by altering the composition of the degradosome. Modulates RNA-binding and helicase activities of the degradosome. In Histophilus somni (strain 2336) (Haemophilus somnus), this protein is Regulator of ribonuclease activity A.